Here is a 192-residue protein sequence, read N- to C-terminus: Xanthine phosphoribosyltransferase (192 aa).

Xanthine is bound by residues Leu20 and Asn27. 128–132 (ANGDA) contributes to the 5-phospho-alpha-D-ribose 1-diphosphate binding site. Lys156 provides a ligand contact to xanthine.

This sequence belongs to the purine/pyrimidine phosphoribosyltransferase family. Xpt subfamily. As to quaternary structure, homodimer.

It localises to the cytoplasm. The enzyme catalyses XMP + diphosphate = xanthine + 5-phospho-alpha-D-ribose 1-diphosphate. It participates in purine metabolism; XMP biosynthesis via salvage pathway; XMP from xanthine: step 1/1. Converts the preformed base xanthine, a product of nucleic acid breakdown, to xanthosine 5'-monophosphate (XMP), so it can be reused for RNA or DNA synthesis. This Staphylococcus carnosus (strain TM300) protein is Xanthine phosphoribosyltransferase.